The primary structure comprises 1064 residues: Alpha-aminoadipic semialdehyde synthase (1064 aa).

The interval 24–445 (VNKWERRTPL…RACISYRGEL (422 aa)) is lysine-ketoglutarate reductase. Thr238 is subject to Phosphothreonine. Residue Ser458 is modified to Phosphoserine. Positions 583–1064 (MTKKSGVLIL…YGIKLMEKAE (482 aa)) are saccharopine dehydrogenase. Residues 703 to 704 (SY), Asp730, Arg830, and 852 to 854 (TLR) contribute to the L-saccharopine site. 729–731 (LDP) is a binding site for NADP(+).

The protein in the N-terminal section; belongs to the AlaDH/PNT family. In the C-terminal section; belongs to the saccharopine dehydrogenase family. In terms of assembly, homodimer. Post-translationally, phosphorylation of Ser-458 seems important for the LKR activity. As to expression, ubiquitous, with higher levels in flowers. Isoform Long is mostly present in young leaves, cotyledons, root tips and mature root parts. Whereas isoform Short is mostly expressed in cotyledons and at low levels in all root parts.

The protein localises to the cytoplasm. The enzyme catalyses L-saccharopine + NADP(+) + H2O = L-lysine + 2-oxoglutarate + NADPH + H(+). It catalyses the reaction L-saccharopine + NAD(+) + H2O = (S)-2-amino-6-oxohexanoate + L-glutamate + NADH + H(+). It functions in the pathway amino-acid degradation; L-lysine degradation via saccharopine pathway; glutaryl-CoA from L-lysine: step 1/6. It participates in amino-acid degradation; L-lysine degradation via saccharopine pathway; glutaryl-CoA from L-lysine: step 2/6. The LKR activity is stimulated by NaCl. Functionally, bifunctional enzyme that catalyzes the first two steps in lysine degradation. The N-terminal and the C-terminal contain lysine-oxoglutarate reductase and saccharopine dehydrogenase activity, respectively. Negatively regulates free Lys accumulation in seeds. The protein is Alpha-aminoadipic semialdehyde synthase (LKR/SDH) of Arabidopsis thaliana (Mouse-ear cress).